The primary structure comprises 130 residues: ER membrane protein complex subunit 5 (130 aa).

The Cytoplasmic segment spans residues 1–3 (MAS). Residues 4–22 (SFWKGVVGIGLFALAHAAF) traverse the membrane as a helical segment. The Lumenal portion of the chain corresponds to 23–43 (SAAQHRSYMRLTEKENETLPI). The chain crosses the membrane as a helical span at residues 44–63 (DIVLQTLLSFVITCYGIVHI). The Cytoplasmic segment spans residues 64–130 (SGEFKDMDAS…LRLRKLENFH (67 aa)).

The protein belongs to the membrane magnesium transporter (TC 1.A.67) family. As to quaternary structure, component of the ER membrane protein complex (EMC).

The protein resides in the endoplasmic reticulum membrane. The protein localises to the golgi apparatus membrane. Its subcellular location is the early endosome membrane. Its function is as follows. Part of the endoplasmic reticulum membrane protein complex (EMC) that enables the energy-independent insertion into endoplasmic reticulum membranes of newly synthesized membrane proteins. Preferentially accommodates proteins with transmembrane domains that are weakly hydrophobic or contain destabilizing features such as charged and aromatic residues. Involved in the cotranslational insertion of multi-pass membrane proteins in which stop-transfer membrane-anchor sequences become ER membrane spanning helices. It is also required for the post-translational insertion of tail-anchored/TA proteins in endoplasmic reticulum membranes. By mediating the proper cotranslational insertion of N-terminal transmembrane domains in an N-exo topology, with translocated N-terminus in the lumen of the ER, controls the topology of multi-pass membrane proteins like the G protein-coupled receptors. By regulating the insertion of various proteins in membranes, it is indirectly involved in many cellular processes. May be involved in Mg(2+) transport. This chain is ER membrane protein complex subunit 5, found in Danio rerio (Zebrafish).